Consider the following 440-residue polypeptide: Protein disulfide-isomerase 2-3 (440 aa).

The signal sequence occupies residues 1–24; that stretch reads MYKSPLTLLTLLTICFGFFDLSSA. 2 consecutive Thioredoxin domains span residues 25–136 and 154–269; these read LYGS…KQIK and SKEK…ELVE. Active-site nucleophile residues include C60 and C63. C60 and C63 are oxidised to a cystine. Residues 143 to 163 form a disordered region; sequence LEGKSKPTGGGSKEKKSEPSA. Residue N168 is glycosylated (N-linked (GlcNAc...) asparagine). Active-site nucleophile residues include C192 and C195. C192 and C195 are disulfide-bonded. Residues 437–440 carry the Prevents secretion from ER motif; it reads KDEL.

It belongs to the protein disulfide isomerase family. Widely expressed.

The protein localises to the endoplasmic reticulum lumen. The catalysed reaction is Catalyzes the rearrangement of -S-S- bonds in proteins.. In terms of biological role, acts as a protein-folding catalyst that interacts with nascent polypeptides to catalyze the formation, isomerization, and reduction or oxidation of disulfide bonds. This is Protein disulfide-isomerase 2-3 (PDIL2-3) from Arabidopsis thaliana (Mouse-ear cress).